Consider the following 129-residue polypeptide: Azurin iso-2 (129 aa).

In terms of domain architecture, Plastocyanin-like spans alanine 1 to glutamate 129. Residues cysteine 3 and cysteine 26 are joined by a disulfide bond. Cu cation contacts are provided by histidine 46, cysteine 112, histidine 117, and methionine 121.

The protein localises to the periplasm. Functionally, this methylothroph organism uses azurin in the oxidation of methylamine. Iso-2 is probably the acceptor of electrons from methylamine dehydrogenase. This is Azurin iso-2 from Methylomonas sp. (strain J).